We begin with the raw amino-acid sequence, 1330 residues long: Kinectin (1330 aa).

At 1-6 the chain is on the cytoplasmic side; that stretch reads MEFYES. The helical; Signal-anchor for type II membrane protein transmembrane segment at 7-29 threads the bilayer; sequence TYFIVLIPSVVITVIFLFFWLFM. Over 30–1330 the chain is Lumenal; sequence KETLYDEVLA…KEKEHYQVLE (1301 aa). Disordered regions lie at residues 49-81 and 108-218; these read PTKTDKKKAEKKKNKKKEIQNGNLHESDSESVP and SSSV…KQKA. Residues Ser75 and Ser77 each carry the phosphoserine modification. Over residues 113–122 the composition is skewed to basic residues; it reads ERKKKEKKHK. Over residues 123–135 the composition is skewed to basic and acidic residues; the sequence is PVLEEQVTKESDV. The residue at position 153 (Thr153) is a Phosphothreonine. Ser156 carries the post-translational modification Phosphoserine. Residues 161–171 show a composition bias toward basic residues; that stretch reads SKKKPGQKKSK. N-linked (GlcNAc...) asparagine glycans are attached at residues Asn172, Asn435, Asn772, Asn904, and Asn1055. Basic and acidic residues predominate over residues 172–182; that stretch reads NGSDDQDKKVE. The stretch at 332–1329 forms a coiled coil; it reads HQLQEKDKLL…TKEKEHYQVL (998 aa). Ser1085 carries the post-translational modification Phosphoserine. A glycan (N-linked (GlcNAc...) asparagine) is linked at Asn1236. The residue at position 1286 (Ser1286) is a Phosphoserine. An N-linked (GlcNAc...) asparagine glycan is attached at Asn1302.

Belongs to the kinectin family. In terms of assembly, parallel homodimers formed between the membrane-bound and the cytosolic form, and also between 2 cytosolic forms. As to expression, expressed in male brain, heart, kidney, liver, lung, spleen and testis.

Its subcellular location is the endoplasmic reticulum membrane. In terms of biological role, receptor for kinesin thus involved in kinesin-driven vesicle motility. This chain is Kinectin (KTN1), found in Vulpes vulpes (Red fox).